We begin with the raw amino-acid sequence, 87 residues long: Small ribosomal subunit protein uS15c (87 aa).

This sequence belongs to the universal ribosomal protein uS15 family. In terms of assembly, part of the 30S ribosomal subunit.

Its subcellular location is the plastid. It localises to the chloroplast. This chain is Small ribosomal subunit protein uS15c (rps15), found in Oenothera glazioviana (Large-flowered evening primrose).